A 270-amino-acid chain; its full sequence is Phosphatidylglycerol--prolipoprotein diacylglyceryl transferase (270 aa).

4 consecutive transmembrane segments (helical) span residues 19–39, 56–76, 92–112, and 116–136; these read FPVY…LWLA, LVLI…VIFE, QGGL…ILFA, and GVSF…GQAI. R138 serves as a coordination point for a 1,2-diacyl-sn-glycero-3-phospho-(1'-sn-glycerol). 3 helical membrane passes run 178 to 198, 206 to 226, and 236 to 256; these read HPTF…LLAL, GELF…VEGL, and LRIA…FIIV.

The protein belongs to the Lgt family.

It localises to the cell membrane. It catalyses the reaction L-cysteinyl-[prolipoprotein] + a 1,2-diacyl-sn-glycero-3-phospho-(1'-sn-glycerol) = an S-1,2-diacyl-sn-glyceryl-L-cysteinyl-[prolipoprotein] + sn-glycerol 1-phosphate + H(+). The protein operates within protein modification; lipoprotein biosynthesis (diacylglyceryl transfer). Its function is as follows. Catalyzes the transfer of the diacylglyceryl group from phosphatidylglycerol to the sulfhydryl group of the N-terminal cysteine of a prolipoprotein, the first step in the formation of mature lipoproteins. The chain is Phosphatidylglycerol--prolipoprotein diacylglyceryl transferase from Bacillus cereus (strain Q1).